The primary structure comprises 396 residues: Phosphoglycerate kinase (396 aa).

Residues 21–23 (DFN), Arg-36, 59–62 (HLGR), Arg-118, and Arg-151 each bind substrate. Residues Lys-201, Gly-292, Glu-323, and 349-352 (GGDS) each bind ATP.

This sequence belongs to the phosphoglycerate kinase family. In terms of assembly, monomer.

Its subcellular location is the cytoplasm. The enzyme catalyses (2R)-3-phosphoglycerate + ATP = (2R)-3-phospho-glyceroyl phosphate + ADP. It functions in the pathway carbohydrate degradation; glycolysis; pyruvate from D-glyceraldehyde 3-phosphate: step 2/5. In Leptospira borgpetersenii serovar Hardjo-bovis (strain L550), this protein is Phosphoglycerate kinase.